A 379-amino-acid chain; its full sequence is GTP cyclohydrolase 1 type 2 homolog (379 aa).

5 residues coordinate a divalent metal cation: His64, His65, Asp103, His333, and Glu337.

The protein belongs to the GTP cyclohydrolase I type 2/NIF3 family. As to quaternary structure, homohexamer.

The protein is GTP cyclohydrolase 1 type 2 homolog of Mycobacterium bovis (strain ATCC BAA-935 / AF2122/97).